The sequence spans 84 residues: uncharacterized protein (84 aa).

This is an uncharacterized protein from Lepidoptera (butterflies and moths).